A 558-amino-acid polypeptide reads, in one-letter code: uncharacterized protein (558 aa).

A run of 6 helical transmembrane segments spans residues 63-83, 90-110, 143-163, 168-188, 226-246, and 258-278; these read LTGIVVALLVVTFAFPVPSIY, VTFGVAPAYATLALAIGTYWI, VAAVHLILWDIGGALLATLYG, VFVTIILFSVTICGVLVATNC, SLGSGVPVTGIATTALYVLLV, and VLILSITTLIFGFLVMWILAW. Positions 279 to 330 constitute an HAMP domain; the sequence is LTAAPVRVVRAALKRVEQGDLRGDLVVFDGTELGELQRGFNAMVNGLRERER. The region spanning 362-486 is the Guanylate cyclase domain; sequence AVVFVDIVGS…KPVNQAARLC (125 aa). Positions 529–558 are disordered; sequence TQLASPHRRPPGSIHLTAEHAEEIRTDRLG. Residues 545–558 are compositionally biased toward basic and acidic residues; the sequence is TAEHAEEIRTDRLG.

The protein belongs to the adenylyl cyclase class-3 family.

It is found in the cell membrane. This is an uncharacterized protein from Mycobacterium tuberculosis (strain CDC 1551 / Oshkosh).